The primary structure comprises 441 residues: Pre-mRNA-splicing factor PRP46 (441 aa).

2 disordered regions span residues 1 to 22 and 81 to 107; these read MPVA…NEPS and MGAS…LTNL. Over residues 83–107 the composition is skewed to polar residues; the sequence is ASSSALTKHTPSASQPTTHDSLTNL. 7 WD repeats span residues 130-169, 172-211, 214-253, 256-295, 298-336, 339-379, and 388-427; these read GHQG…LRLT, GHIM…VVRH, GHLS…PVVV, GHKS…TMTT, HHKK…LVLN, DQNA…QSTQ, and ESEN…TAES.

Belongs to the WD repeat PRL1/PRL2 family. In terms of assembly, associated with the spliceosome.

It localises to the cytoplasm. The protein localises to the nucleus. Its function is as follows. Involved in pre-mRNA splicing and required for cell cycle progression at G2/M. The chain is Pre-mRNA-splicing factor PRP46 (PRP46) from Yarrowia lipolytica (strain CLIB 122 / E 150) (Yeast).